The sequence spans 147 residues: Ribosome-binding factor A (147 aa).

The interval 122–147 (QQQFGSVDDDVIENDIEESDDTEGKV) is disordered. Positions 128–147 (VDDDVIENDIEESDDTEGKV) are enriched in acidic residues.

It belongs to the RbfA family. In terms of assembly, monomer. Binds 30S ribosomal subunits, but not 50S ribosomal subunits or 70S ribosomes.

The protein localises to the cytoplasm. One of several proteins that assist in the late maturation steps of the functional core of the 30S ribosomal subunit. Associates with free 30S ribosomal subunits (but not with 30S subunits that are part of 70S ribosomes or polysomes). Required for efficient processing of 16S rRNA. May interact with the 5'-terminal helix region of 16S rRNA. The sequence is that of Ribosome-binding factor A from Shewanella oneidensis (strain ATCC 700550 / JCM 31522 / CIP 106686 / LMG 19005 / NCIMB 14063 / MR-1).